The sequence spans 331 residues: Smad-related protein daf-14 (331 aa).

In terms of domain architecture, MH2 spans 134–331; the sequence is WCTIFYYELT…NERPEIGSRS (198 aa). The segment at 168-187 is disordered; the sequence is ECRMSLTSQPSSRNSKSSQI. The span at 175–185 shows a compositional bias: low complexity; sequence SQPSSRNSKSS.

Interacts with R-SMAD daf-8 and co-SMAD daf-3. Interacts with daf-3 in a daf-8 dependent manner.

Probably an atypical receptor-regulated SMAD (R-SMAD) that is an intracellular signal transducer and transcriptional modulator activated by TGF-beta-like daf-7 signaling. Plays a role in TGF-beta-like daf-7 signaling in regulating entry into a developmentally arrested larval state known as dauer, in response to harsh environmental conditions; partially redundant with R-SMAD daf-8. The sequence is that of Smad-related protein daf-14 from Caenorhabditis elegans.